The primary structure comprises 603 residues: Ribosome-inactivating protein PMRIPt (603 aa).

Residues 1–39 form the signal peptide; the sequence is MRVVAGILYIVVMAICGLGIQGGTLQDYPSVYFQDSTLQ. N-linked (GlcNAc...) asparagine glycosylation is found at asparagine 74 and asparagine 168. Glutamate 208 is a catalytic residue. 3 disulfides stabilise this stretch: cysteine 297–cysteine 335, cysteine 351–cysteine 370, and cysteine 392–cysteine 409. Ricin B-type lectin domains are found at residues 338-466 and 467-593; these read GEPT…VGDD and VEPI…WMTM. The stretch at 348-388 is one 1-alpha repeat; the sequence is DGLCMDVRNESNNDGIPIQLWPCGAQRNQQWTFHTDGTIQS. Asparagine 356 and asparagine 408 each carry an N-linked (GlcNAc...) asparagine glycan. The 1-beta repeat unit spans residues 389–430; the sequence is MGKCMTSNGYHPGDYVMIFNCSTAPVPDATKWVVSIDGSITN. Residues 433-466 form a 1-gamma repeat; that stretch reads SGLVLTAPQAAQTTILLVVRNTHSAKQGRSVGDD. One copy of the 2-alpha repeat lies at 478-516; that stretch reads KYMCLQGNNENNTRVWLEDCAVDRPQQWWALYSDGTIRV. Disulfide bonds link cysteine 481/cysteine 497 and cysteine 523/cysteine 540. Asparagine 488 is a glycosylation site (N-linked (GlcNAc...) asparagine). A 2-beta repeat occupies 520-558; it reads RSLCVTSDGHSSRDAIIILTCDGGINQRLVFNTDGTILN. The stretch at 561–597 is one 2-gamma repeat; that stretch reads AQLVMDVRQSNVALRQIILYQPTGNPNQQWMTMITRT.

It belongs to the ribosome-inactivating protein family. Type 2 RIP subfamily. Tetramer of four pairs of disulfide bound A-B chains. The precursor is processed in two chains, A and B, that are linked by a disulfide bond. In terms of processing, glycosylated. As to expression, expressed in rhizome and more abundantly in leaves (at protein level).

The catalysed reaction is Endohydrolysis of the N-glycosidic bond at one specific adenosine on the 28S rRNA.. With respect to regulation, strongly inhibited by asialofetuin and asialomucin. Its function is as follows. GalNAc-specific agglutinin. Behaves as a type-2 ribosome-inactivating protein. Inhibits mammalian ribosomes. The A chain is responsible for inhibiting protein synthesis through the catalytic inactivation of 60S ribosomal subunits by removing adenine from position 4,324 of 28S rRNA. The B chain binds to cell receptors and probably facilitates the entry into the cell of the A chain; B chains are also responsible for cell agglutination (lectin activity). Involved in plant defense against insects. Has very low cytotoxic activity against the human tumor cell lines CEM and Molt4. The protein is Ribosome-inactivating protein PMRIPt of Polygonatum multiflorum (Solomon's seal).